Consider the following 395-residue polypeptide: Tyrosine--tRNA ligase (395 aa).

The 'HIGH' region signature appears at 42–51; the sequence is PTAPDIHLGH. A 'KMSKS' region motif is present at residues 226–230; the sequence is KMSKS. Residue lysine 229 coordinates ATP. In terms of domain architecture, S4 RNA-binding spans 334–394; it reads IGLATLLKEA…GKRKFARVTV (61 aa).

The protein belongs to the class-I aminoacyl-tRNA synthetase family. TyrS type 2 subfamily. Homodimer.

The protein resides in the cytoplasm. The enzyme catalyses tRNA(Tyr) + L-tyrosine + ATP = L-tyrosyl-tRNA(Tyr) + AMP + diphosphate + H(+). Its function is as follows. Catalyzes the attachment of tyrosine to tRNA(Tyr) in a two-step reaction: tyrosine is first activated by ATP to form Tyr-AMP and then transferred to the acceptor end of tRNA(Tyr). In Haemophilus influenzae (strain 86-028NP), this protein is Tyrosine--tRNA ligase.